A 1066-amino-acid polypeptide reads, in one-letter code: E3 ubiquitin-protein ligase RNF31 (1066 aa).

The polyubiquitin-binding stretch occupies residues 1-479 (MPGDEERGFL…PEKQRQDKMR (479 aa)). The region spanning 70 to 141 (TLSTALNILE…SFPEGQEEPD (72 aa)) is the PUB domain. A disordered region spans residues 251–287 (LRQALPGSHQTASLSSSLPASSQPRPPSSSLALGDSS). Over residues 262 to 287 (ASLSSSLPASSQPRPPSSSLALGDSS) the composition is skewed to low complexity. 2 consecutive RanBP2-type zinc fingers follow at residues 293–325 (PANACLPWHCLTCATLNEPWAVFCAVCSQPKGC) and 344–373 (ARDQWACQSCTFENEAAAVLCAICERPRLA). Serine 377 bears the Phosphoserine mark. The RanBP2-type 3 zinc finger occupies 403 to 432 (QPQVWYCDHCTFCNSGPVWVCAMCNRTRDP). The tract at residues 434-478 (PTQPALQSYPSSLEKGRPKPGSSQHLGSSLPASCGDPEKQRQDKM) is disordered. The span at 454–464 (GSSQHLGSSLP) shows a compositional bias: polar residues. Over residues 469 to 478 (DPEKQRQDKM) the composition is skewed to basic and acidic residues. An interaction with RBCK1 region spans residues 557-610 (GNLDEAVEECVRARRRKVHELQSLGFGPKEGSLQALFQHGGDVARALTELQRQR). A UBA domain is found at 558-609 (NLDEAVEECVRARRRKVHELQSLGFGPKEGSLQALFQHGGDVARALTELQRQ). The segment at 689-923 (LAQECAVCGW…KSLHGHHPRD (235 aa)) is TRIAD supradomain. Zn(2+) is bound by residues cysteine 693, cysteine 696, cysteine 711, cysteine 713, cysteine 716, cysteine 719, cysteine 738, cysteine 741, cysteine 793, cysteine 796, cysteine 811, cysteine 814, cysteine 819, cysteine 822, histidine 830, cysteine 835, cysteine 865, and cysteine 868. The RING-type 1 zinc-finger motif lies at 693 to 743 (CAVCGWALPRNRMQALISCECTICPECFRQHFTIALKEKHITDMVCPACGR). The IBR-type zinc finger occupies 773–835 (ALFHKKLTEA…WEEQHRGRSC (63 aa)). The RING-type 2; atypical zinc finger occupies 865–895 (CPKCKFSYALARGGCMHFHCTQCRHQFCSGC). Cysteine 879 is an active-site residue. 6 residues coordinate Zn(2+): cysteine 884, cysteine 887, cysteine 892, cysteine 895, cysteine 910, and histidine 919. The interval 904–1066 (KCPDPNCKVK…LGQSIARRRK (163 aa)) is LDD domain.

The protein belongs to the RBR family. In terms of assembly, component of the LUBAC complex (linear ubiquitin chain assembly complex) which consists of SHARPIN, RBCK1 and RNF31. LUBAC has a MW of approximately 600 kDa suggesting a heteromultimeric assembly of its subunits. Associates with the TNF-R1 signaling complex (TNF-RSC) in a stimulation-dependent manner. Interacts (via the PUB domain) with OTULIN (via the PIM motif); the interaction is direct. Interacts (via the PUB domain) with VCP (via the PIM motif). Interacts (via the PUB domain) with SPATA2 (via the PIM motif); interaction is direct and bridges RNF31 and CYLD. Interacts with CYLD; the interaction is indirect and is mediated via SPATA2. Interacts with MUSK. Interacts with CARD11, promoting linear ubiquitination of BCL10. In terms of processing, autoubiquitinated. Interaction with OTULIN is required to suppress formation of 'Met-1'-linked polyubiquitin chains and prevent subsequent inactivation of the LUBAC complex. Cleaved by caspase during apoptosis. Widely expressed (at protein level). Not expressed in heart.

The protein resides in the cytoplasm. It catalyses the reaction [E2 ubiquitin-conjugating enzyme]-S-ubiquitinyl-L-cysteine + [acceptor protein]-L-lysine = [E2 ubiquitin-conjugating enzyme]-L-cysteine + [acceptor protein]-N(6)-ubiquitinyl-L-lysine.. The protein operates within protein modification; protein ubiquitination. In terms of biological role, E3 ubiquitin-protein ligase component of the LUBAC complex which conjugates linear ('Met-1'-linked) polyubiquitin chains to substrates and plays a key role in NF-kappa-B activation and regulation of inflammation. LUBAC conjugates linear polyubiquitin to IKBKG and RIPK1 and is involved in activation of the canonical NF-kappa-B and the JNK signaling pathways. Linear ubiquitination mediated by the LUBAC complex interferes with TNF-induced cell death and thereby prevents inflammation. LUBAC is recruited to the TNF-R1 signaling complex (TNF-RSC) following polyubiquitination of TNF-RSC components by BIRC2 and/or BIRC3 and to conjugate linear polyubiquitin to IKBKG and possibly other components contributing to the stability of the complex. The LUBAC complex is also involved in innate immunity by conjugating linear polyubiquitin chains at the surface of bacteria invading the cytosol to form the ubiquitin coat surrounding bacteria. LUBAC is not able to initiate formation of the bacterial ubiquitin coat, and can only promote formation of linear polyubiquitins on pre-existing ubiquitin. Recruited to the surface of bacteria by RNF213, which initiates the bacterial ubiquitin coat. The bacterial ubiquitin coat acts as an 'eat-me' signal for xenophagy and promotes NF-kappa-B activation. Together with OTULIN, the LUBAC complex regulates the canonical Wnt signaling during angiogenesis. RNF31 is required for linear ubiquitination of BCL10, thereby promoting TCR-induced NF-kappa-B activation. Binds polyubiquitin of different linkage types. The protein is E3 ubiquitin-protein ligase RNF31 of Mus musculus (Mouse).